A 283-amino-acid polypeptide reads, in one-letter code: Pantothenate synthetase (283 aa).

Position 30 to 37 (30 to 37 (MGNLHSGH)) interacts with ATP. His-37 acts as the Proton donor in catalysis. (R)-pantoate is bound at residue Gln-61. Gln-61 is a binding site for beta-alanine. 149–152 (GQKD) contributes to the ATP binding site. Gln-155 lines the (R)-pantoate pocket. ATP is bound by residues Val-178 and 186–189 (LSSR).

It belongs to the pantothenate synthetase family. As to quaternary structure, homodimer.

It is found in the cytoplasm. The catalysed reaction is (R)-pantoate + beta-alanine + ATP = (R)-pantothenate + AMP + diphosphate + H(+). The protein operates within cofactor biosynthesis; (R)-pantothenate biosynthesis; (R)-pantothenate from (R)-pantoate and beta-alanine: step 1/1. Its function is as follows. Catalyzes the condensation of pantoate with beta-alanine in an ATP-dependent reaction via a pantoyl-adenylate intermediate. This Pseudomonas fluorescens (strain SBW25) protein is Pantothenate synthetase.